Consider the following 430-residue polypeptide: Tektin-2 (430 aa).

Coiled-coil stretches lie at residues 82 to 160 and 273 to 379; these read LTDL…QAFE and EKVY…DIAC.

This sequence belongs to the tektin family. Microtubule inner protein component of sperm flagellar doublet microtubules. May interact with CCDC172. In terms of processing, tyrosine phosphorylated. Post-translationally, ubiquitinated, leading to its degradation. Deubiquitinated by USP16, promoting its stability.

It is found in the cytoplasm. The protein localises to the cytoskeleton. The protein resides in the cilium axoneme. It localises to the flagellum axoneme. Its subcellular location is the microtubule organizing center. Microtubule inner protein (MIP) part of the dynein-decorated doublet microtubules (DMTs) in cilia and flagellar axoneme. Plays a key role in the assembly or attachment of the inner dynein arm to microtubules in sperm flagella and tracheal cilia. Forms filamentous polymers in the walls of ciliary and flagellar microtubules. The protein is Tektin-2 (TEKT2) of Macaca fascicularis (Crab-eating macaque).